The chain runs to 223 residues: GTP cyclohydrolase 1 (223 aa).

Residues Cys114, His117, and Cys185 each coordinate Zn(2+).

This sequence belongs to the GTP cyclohydrolase I family. In terms of assembly, homomer.

The catalysed reaction is GTP + H2O = 7,8-dihydroneopterin 3'-triphosphate + formate + H(+). It functions in the pathway cofactor biosynthesis; 7,8-dihydroneopterin triphosphate biosynthesis; 7,8-dihydroneopterin triphosphate from GTP: step 1/1. This is GTP cyclohydrolase 1 from Chlorobium chlorochromatii (strain CaD3).